The following is a 185-amino-acid chain: Elongation factor P (185 aa).

Belongs to the elongation factor P family.

The protein resides in the cytoplasm. Its pathway is protein biosynthesis; polypeptide chain elongation. Its function is as follows. Involved in peptide bond synthesis. Stimulates efficient translation and peptide-bond synthesis on native or reconstituted 70S ribosomes in vitro. Probably functions indirectly by altering the affinity of the ribosome for aminoacyl-tRNA, thus increasing their reactivity as acceptors for peptidyl transferase. This Deinococcus geothermalis (strain DSM 11300 / CIP 105573 / AG-3a) protein is Elongation factor P.